Reading from the N-terminus, the 445-residue chain is Proline--tRNA ligase (445 aa).

The protein belongs to the class-II aminoacyl-tRNA synthetase family. ProS type 2 subfamily. In terms of assembly, homodimer.

It is found in the cytoplasm. The enzyme catalyses tRNA(Pro) + L-proline + ATP = L-prolyl-tRNA(Pro) + AMP + diphosphate. Its function is as follows. Catalyzes the attachment of proline to tRNA(Pro) in a two-step reaction: proline is first activated by ATP to form Pro-AMP and then transferred to the acceptor end of tRNA(Pro). The chain is Proline--tRNA ligase from Cereibacter sphaeroides (strain ATCC 17025 / ATH 2.4.3) (Rhodobacter sphaeroides).